A 183-amino-acid chain; its full sequence is Ras-like protein (183 aa).

G10–S17 lines the GTP pocket. The Effector region signature appears at Y32–Y40. GTP contacts are provided by residues D57–Q61 and N116–D119.

The protein belongs to the small GTPase superfamily. Ras family.

Its subcellular location is the cell membrane. It catalyses the reaction GTP + H2O = GDP + phosphate + H(+). With respect to regulation, alternates between an inactive form bound to GDP and an active form bound to GTP. Activated by a guanine nucleotide-exchange factor (GEF) and inactivated by a GTPase-activating protein (GAP). Ras proteins bind GDP/GTP and possess intrinsic GTPase activity. The protein is Ras-like protein of Carassius auratus (Goldfish).